The primary structure comprises 130 residues: Small ribosomal subunit protein uS11c (130 aa).

This sequence belongs to the universal ribosomal protein uS11 family. In terms of assembly, part of the 30S ribosomal subunit.

The protein localises to the plastid. It is found in the chloroplast. The protein is Small ribosomal subunit protein uS11c of Cycas taitungensis (Prince sago).